The chain runs to 78 residues: Large ribosomal subunit protein bL28 (78 aa).

Positions 1-20 (MSQVCQVTGKRPVVGNNRSH) are disordered.

It belongs to the bacterial ribosomal protein bL28 family.

This Idiomarina loihiensis (strain ATCC BAA-735 / DSM 15497 / L2-TR) protein is Large ribosomal subunit protein bL28.